Reading from the N-terminus, the 140-residue chain is MAIERTFSMIKPDATKRNLTGAITKMLEDAGLRVVASKRVWMSRREAEGFYAVHKDRPFFGELVEGMTSGPTVVQVLEGEGAILKNREIMGATNPANAAEGTIRKVHALSIGENSVHGSDAPETAAQEIKYWFSDTEIVG.

6 residues coordinate ATP: Lys-11, Phe-59, Arg-87, Thr-93, Arg-104, and Asn-114. His-117 serves as the catalytic Pros-phosphohistidine intermediate.

The protein belongs to the NDK family. Homotetramer. Requires Mg(2+) as cofactor.

Its subcellular location is the cytoplasm. It catalyses the reaction a 2'-deoxyribonucleoside 5'-diphosphate + ATP = a 2'-deoxyribonucleoside 5'-triphosphate + ADP. The enzyme catalyses a ribonucleoside 5'-diphosphate + ATP = a ribonucleoside 5'-triphosphate + ADP. In terms of biological role, major role in the synthesis of nucleoside triphosphates other than ATP. The ATP gamma phosphate is transferred to the NDP beta phosphate via a ping-pong mechanism, using a phosphorylated active-site intermediate. The protein is Nucleoside diphosphate kinase of Rhizobium etli (strain ATCC 51251 / DSM 11541 / JCM 21823 / NBRC 15573 / CFN 42).